A 338-amino-acid polypeptide reads, in one-letter code: Holliday junction branch migration complex subunit RuvB (338 aa).

A large ATPase domain (RuvB-L) region spans residues 4-187; sequence ADKDRLVSGD…FGISEHMAYY (184 aa). Residues Leu26, Arg27, Gly68, Lys71, Thr72, Thr73, 134–136, Arg177, Tyr187, and Arg224 each bind ATP; that span reads EDF. Thr72 provides a ligand contact to Mg(2+). The interval 188 to 258 is small ATPAse domain (RuvB-S); that stretch reads SADDLSEIVK…MVDHALDQLQ (71 aa). The tract at residues 261-338 is head domain (RuvB-H); it reads QQGLDQIDRK…AHMGMSAEQH (78 aa). Positions 316 and 321 each coordinate DNA.

The protein belongs to the RuvB family. As to quaternary structure, homohexamer. Forms an RuvA(8)-RuvB(12)-Holliday junction (HJ) complex. HJ DNA is sandwiched between 2 RuvA tetramers; dsDNA enters through RuvA and exits via RuvB. An RuvB hexamer assembles on each DNA strand where it exits the tetramer. Each RuvB hexamer is contacted by two RuvA subunits (via domain III) on 2 adjacent RuvB subunits; this complex drives branch migration. In the full resolvosome a probable DNA-RuvA(4)-RuvB(12)-RuvC(2) complex forms which resolves the HJ.

It localises to the cytoplasm. It carries out the reaction ATP + H2O = ADP + phosphate + H(+). The RuvA-RuvB-RuvC complex processes Holliday junction (HJ) DNA during genetic recombination and DNA repair, while the RuvA-RuvB complex plays an important role in the rescue of blocked DNA replication forks via replication fork reversal (RFR). RuvA specifically binds to HJ cruciform DNA, conferring on it an open structure. The RuvB hexamer acts as an ATP-dependent pump, pulling dsDNA into and through the RuvAB complex. RuvB forms 2 homohexamers on either side of HJ DNA bound by 1 or 2 RuvA tetramers; 4 subunits per hexamer contact DNA at a time. Coordinated motions by a converter formed by DNA-disengaged RuvB subunits stimulates ATP hydrolysis and nucleotide exchange. Immobilization of the converter enables RuvB to convert the ATP-contained energy into a lever motion, pulling 2 nucleotides of DNA out of the RuvA tetramer per ATP hydrolyzed, thus driving DNA branch migration. The RuvB motors rotate together with the DNA substrate, which together with the progressing nucleotide cycle form the mechanistic basis for DNA recombination by continuous HJ branch migration. Branch migration allows RuvC to scan DNA until it finds its consensus sequence, where it cleaves and resolves cruciform DNA. This chain is Holliday junction branch migration complex subunit RuvB, found in Lacticaseibacillus paracasei (strain ATCC 334 / BCRC 17002 / CCUG 31169 / CIP 107868 / KCTC 3260 / NRRL B-441) (Lactobacillus paracasei).